The following is a 165-amino-acid chain: MENSYEETIDKRRVHLRPDTLRDPAPASLHLLPCEVPVNRPTPVGRFFTPAIRMGRDGLEASFRGRSLRGEEVVVPPGFVGYVVTEEKAEVLMGKQDDHERQEQELLEPPEALERDCDRFMGATASFSSFTVWGLESIPGPDAKLRGALSWPSLAAAIHAQVPED.

At methionine 1 the chain carries N-acetylmethionine.

It belongs to the RNase H2 subunit C family. As to quaternary structure, the RNase H2 complex is a heterotrimer composed of the catalytic subunit RNASEH2A and the non-catalytic subunits RNASEH2B and RNASEH2C.

Its subcellular location is the nucleus. Functionally, non catalytic subunit of RNase H2, an endonuclease that specifically degrades the RNA of RNA:DNA hybrids. Participates in DNA replication, possibly by mediating the removal of lagging-strand Okazaki fragment RNA primers during DNA replication. Mediates the excision of single ribonucleotides from DNA:RNA duplexes. This chain is Ribonuclease H2 subunit C (RNASEH2C), found in Bos taurus (Bovine).